Reading from the N-terminus, the 216-residue chain is MOB kinase activator 3B (216 aa).

C82, C87, H164, and H169 together coordinate Zn(2+).

Its function is as follows. Modulates LATS1 expression in the Hippo signaling pathway which plays a pivotal role in organ size control and tumor suppression by restricting proliferation and promoting apoptosis. The protein is MOB kinase activator 3B (Mob3b) of Mus musculus (Mouse).